A 466-amino-acid chain; its full sequence is Probable Xaa-Pro aminopeptidase pepP (466 aa).

4 residues coordinate Mn(2+): aspartate 264, aspartate 275, glutamate 398, and glutamate 438.

This sequence belongs to the peptidase M24B family. It depends on Mn(2+) as a cofactor.

It carries out the reaction Release of any N-terminal amino acid, including proline, that is linked to proline, even from a dipeptide or tripeptide.. In terms of biological role, catalyzes the removal of a penultimate prolyl residue from the N-termini of peptides. This Aspergillus terreus (strain NIH 2624 / FGSC A1156) protein is Probable Xaa-Pro aminopeptidase pepP (pepP).